The chain runs to 506 residues: 2,3-bisphosphoglycerate-independent phosphoglycerate mutase (506 aa).

2 residues coordinate Mn(2+): D13 and S63. The Phosphoserine intermediate role is filled by S63. Substrate contacts are provided by residues H124, 153–154 (RD), R183, R189, 254–257 (RADR), and K330. D396, H400, D437, H438, and H456 together coordinate Mn(2+).

It belongs to the BPG-independent phosphoglycerate mutase family. Monomer. Mn(2+) is required as a cofactor.

The catalysed reaction is (2R)-2-phosphoglycerate = (2R)-3-phosphoglycerate. It participates in carbohydrate degradation; glycolysis; pyruvate from D-glyceraldehyde 3-phosphate: step 3/5. Catalyzes the interconversion of 2-phosphoglycerate and 3-phosphoglycerate. The chain is 2,3-bisphosphoglycerate-independent phosphoglycerate mutase from Cereibacter sphaeroides (strain ATCC 17023 / DSM 158 / JCM 6121 / CCUG 31486 / LMG 2827 / NBRC 12203 / NCIMB 8253 / ATH 2.4.1.) (Rhodobacter sphaeroides).